Reading from the N-terminus, the 291-residue chain is Lipase (291 aa).

An N-terminal signal peptide occupies residues 1–17 (MRSSLVLFFVSAWTALA). Positions 18–22 (SPIRR) are excised as a propeptide. Cystine bridges form between Cys-44/Cys-290, Cys-58/Cys-63, and Cys-126/Cys-129. Catalysis depends on Ser-168, which acts as the Nucleophile. Catalysis depends on charge relay system residues Asp-223 and His-280.

This sequence belongs to the AB hydrolase superfamily. Lipase family.

The enzyme catalyses a triacylglycerol + H2O = a diacylglycerol + a fatty acid + H(+). The chain is Lipase (LIP) from Thermomyces lanuginosus (Humicola lanuginosa).